We begin with the raw amino-acid sequence, 561 residues long: MNINVAELLNGNYILLLFVVLALGLCLGKLRLGSIQLGNSIGVLVVSLLLGQQHFSINTDALNLGFMLFIFCVGVEAGPNFFSIFFRDGKNYLMLALVMVGSALVIALGLGKLFGWDIGLTAGMLAGSMTSTPVLVGAGDTLRHSGMESRQLSLALDNLSLGYALTYLIGLVSLIVGARYLPKLQHQDLQTSAQQIARERGLDTDANRKVYLPVIRAYRVGPELVAWTDGKNLRELGIYRQTGCYIERIRRNGILANPDGDAVLQMGDEIALVGYPDAHARLDPSFRNGKEVFDRDLLDMRIVTEEVVVKNHNAVGKRLAQLKLTDHGCFLNRVIRSQIEMPIDDNVVLNKGDVLQVSGDARRVKTIADRIGFISIHSQVTDLLAFCAFFVIGLMIGMITFQFSTFSFGMGNAAGLLFAGIMLGFMRANHPTFGYIPQGALSMVKEFGLMVFMAGVGLSAGSGINNGLGAIGGQMLIAGLIVSLVPVVICFLFGAYVLRMNRALLFGAMMGARTCAPAMEIISDTAHSNIPALGYAGTYAIANVLLTLAGTIIVMVWPGLG.

Helical transmembrane passes span 8-28 (LLNGNYILLLFVVLALGLCLG), 32-52 (LGSIQLGNSIGVLVVSLLLGQ), 66-86 (FMLFIFCVGVEAGPNFFSIFF), 94-114 (MLALVMVGSALVIALGLGKLF), and 158-178 (NLSLGYALTYLIGLVSLIVGA). 2 consecutive RCK C-terminal domains span residues 200-288 (RGLD…SFRN) and 292-373 (VFDR…RIGF). Helical transmembrane passes span 383–403 (LLAFCAFFVIGLMIGMITFQF), 406–426 (FSFGMGNAAGLLFAGIMLGFM), 451–471 (VFMAGVGLSAGSGINNGLGAI), 475–495 (MLIAGLIVSLVPVVICFLFGA), and 540–560 (AIANVLLTLAGTIIVMVWPGL).

Belongs to the AAE transporter (TC 2.A.81) family. YbjL subfamily.

It is found in the cell membrane. This is Putative transport protein YbjL from Shigella boydii serotype 4 (strain Sb227).